The primary structure comprises 112 residues: MQDTGSVVPLHWFGFGYAALVASGGIIGYVKAGSVPSLAAGLLFGSLAGLGAYQLSQDPRNVWVFLATSGTLAGIMGMRFYHSGKFMPAGLIAGASLLMVAKVGVSMFNRPH.

The next 4 membrane-spanning stretches (helical) occupy residues 7-27, 32-52, 62-82, and 88-108; these read VVPLHWFGFGYAALVASGGII, AGSVPSLAAGLLFGSLAGLGA, VWVFLATSGTLAGIMGMRFYH, and PAGLIAGASLLMVAKVGVSMF.

The protein belongs to the TMEM14 family.

The protein resides in the mitochondrion membrane. Required for normal heme biosynthesis. This Homo sapiens (Human) protein is Transmembrane protein 14C (TMEM14C).